Reading from the N-terminus, the 305-residue chain is Glycine--tRNA ligase alpha subunit (305 aa).

The protein belongs to the class-II aminoacyl-tRNA synthetase family. In terms of assembly, tetramer of two alpha and two beta subunits.

The protein localises to the cytoplasm. It catalyses the reaction tRNA(Gly) + glycine + ATP = glycyl-tRNA(Gly) + AMP + diphosphate. This chain is Glycine--tRNA ligase alpha subunit, found in Streptococcus pneumoniae (strain ATCC 700669 / Spain 23F-1).